Here is a 454-residue protein sequence, read N- to C-terminus: Butyrophilin-like protein 2 (454 aa).

At 1–6 (MVDCPR) the chain is on the cytoplasmic side. Residues 7–23 (YSLSGVAASFLFVLLTI) traverse the membrane as a helical; Signal-anchor for type II membrane protein segment. The Extracellular segment spans residues 24 to 454 (KHPDDFRVVG…KTARFPLSGW (431 aa)). Ig-like V-type domains are found at residues 27-140 (DDFR…VLLQ), 148-234 (PNIH…ATIA), 244-355 (ASVS…ARVD), and 365-452 (PRIT…FPLS). 4 disulfides stabilise this stretch: Cys50-Cys124, Cys164-Cys218, Cys267-Cys341, and Cys381-Cys435. N-linked (GlcNAc...) asparagine glycans are attached at residues Asn210, Asn296, Asn427, and Asn432.

The protein belongs to the immunoglobulin superfamily. BTN/MOG family. In terms of tissue distribution, highly expressed in intestine and at reduced levels in lung and stomach. Also expressed in thymus, spleen, lymph nodes, T-cells, B-cells, and macrophages.

It is found in the membrane. In terms of biological role, negative regulator of T-cell proliferation. This is Butyrophilin-like protein 2 from Mus musculus (Mouse).